A 309-amino-acid chain; its full sequence is D-alanine--D-alanine ligase (309 aa).

The 196-residue stretch at 110-305 (KLCWTGAGLP…FQELVWHILE (196 aa)) folds into the ATP-grasp domain. 136 to 191 (RQALGFPVIVKPAEEGSSIGMSRAATAEELAQAWERASGYGCAVFAERWIDGVEYT) provides a ligand contact to ATP. The Mg(2+) site is built by D259, E272, and N274.

Belongs to the D-alanine--D-alanine ligase family. Requires Mg(2+) as cofactor. The cofactor is Mn(2+).

It is found in the cytoplasm. It carries out the reaction 2 D-alanine + ATP = D-alanyl-D-alanine + ADP + phosphate + H(+). It participates in cell wall biogenesis; peptidoglycan biosynthesis. In terms of biological role, cell wall formation. The sequence is that of D-alanine--D-alanine ligase from Methylococcus capsulatus (strain ATCC 33009 / NCIMB 11132 / Bath).